The sequence spans 379 residues: DNA replication and repair protein RecF (379 aa).

30–37 serves as a coordination point for ATP; the sequence is GDNAQGKS.

The protein belongs to the RecF family.

It localises to the cytoplasm. In terms of biological role, the RecF protein is involved in DNA metabolism; it is required for DNA replication and normal SOS inducibility. RecF binds preferentially to single-stranded, linear DNA. It also seems to bind ATP. The protein is DNA replication and repair protein RecF of Thermosynechococcus vestitus (strain NIES-2133 / IAM M-273 / BP-1).